The following is a 163-amino-acid chain: Nucleotide-binding protein ECA1137 (163 aa).

Belongs to the YajQ family.

Functionally, nucleotide-binding protein. The sequence is that of Nucleotide-binding protein ECA1137 from Pectobacterium atrosepticum (strain SCRI 1043 / ATCC BAA-672) (Erwinia carotovora subsp. atroseptica).